Consider the following 510-residue polypeptide: Inositol-3-phosphate synthase 1 (510 aa).

NAD(+)-binding residues include glycine 70, glycine 71, asparagine 72, asparagine 73, aspartate 143, isoleucine 180, glutamine 190, arginine 193, threonine 230, alanine 231, asparagine 232, threonine 233, glycine 281, serine 282, aspartate 306, serine 309, asparagine 340, asparagine 341, aspartate 342, lysine 355, glycine 393, aspartate 394, aspartate 422, and serine 423.

The protein belongs to the myo-inositol 1-phosphate synthase family. NAD(+) is required as a cofactor.

The protein localises to the cytoplasm. It localises to the cytosol. It is found in the nucleus. It catalyses the reaction D-glucose 6-phosphate = 1D-myo-inositol 3-phosphate. Its pathway is polyol metabolism; myo-inositol biosynthesis; myo-inositol from D-glucose 6-phosphate: step 1/2. Its function is as follows. Key enzyme in myo-inositol biosynthesis pathway that catalyzes the conversion of glucose 6-phosphate to 1-myo-inositol 1-phosphate in a NAD-dependent manner. May play a role in oxidative stress resistance and influences ascorbate levels. This is Inositol-3-phosphate synthase 1 from Populus euphratica (Euphrates poplar).